We begin with the raw amino-acid sequence, 233 residues long: Small ribosomal subunit protein uS3 (233 aa).

Residues 39–107 form the KH type-2 domain; the sequence is VRTFLTKELK…PAQINISEVR (69 aa).

The protein belongs to the universal ribosomal protein uS3 family. Part of the 30S ribosomal subunit. Forms a tight complex with proteins S10 and S14.

Binds the lower part of the 30S subunit head. Binds mRNA in the 70S ribosome, positioning it for translation. In Pseudoalteromonas translucida (strain TAC 125), this protein is Small ribosomal subunit protein uS3.